The chain runs to 61 residues: Temporin-CDYa (61 aa).

An N-terminal signal peptide occupies residues 1–22 (MFPLKKSLLLLFFLGTINFSFC). Residues 23-44 (EEERNAEEERRDDPEERDVAME) constitute a propeptide that is removed on maturation. The residue at position 59 (leucine 59) is a Leucine amide.

The protein belongs to the frog skin active peptide (FSAP) family. Temporin subfamily. As to expression, expressed by the skin glands.

It localises to the secreted. Functionally, antimicrobial peptide. In Rana dybowskii (Dybovsky's frog), this protein is Temporin-CDYa.